An 859-amino-acid polypeptide reads, in one-letter code: DNA mismatch repair protein MutS (859 aa).

An ATP-binding site is contributed by G618–S625.

The protein belongs to the DNA mismatch repair MutS family.

This protein is involved in the repair of mismatches in DNA. It is possible that it carries out the mismatch recognition step. This protein has a weak ATPase activity. This Shewanella sediminis (strain HAW-EB3) protein is DNA mismatch repair protein MutS.